A 428-amino-acid polypeptide reads, in one-letter code: MQKIEYIIITKLWVGDCMEELARDKERAILVAIISSPEDEETLNELKELAVTAGAEVIGILTQKKKGINKAHYIGKGKLEELKMFVENQQADLVIVNDELTGTQIKNLEDALGVKIVDRTNLILDIFAKRARSKEGMLQVELAQLKYRLPRLVGLGGQLSRLGGGIGTRGPGETKLEVDRRHIRNRIKAIEEKLEELEKHRNLQRQRRKKNQIPVVAIVGYTNAGKSTLLNALTGADAYVEDKLFATLDPTARKLVLPSGREVILTDTVGFIRKLPHDLVEAFKSTLEEVKYADLLLHVIDVTSPDMDEKIKVVEKVLSDLGAIETPRINVYNKIDLLEIVPSGNNRDIYISAKNKIGLDRLLEAIERELFKETEVVSFLFPYEKTREYNYLKERGKVIEEDFDEKGISVKAEVTCEIKERLRNFIIS.

A Hflx-type G domain is found at 214–374 (PVVAIVGYTN…AIERELFKET (161 aa)). GTP is bound by residues 220 to 227 (GYTNAGKS), 245 to 249 (FATLD), 267 to 270 (DTVG), 333 to 336 (NKID), and 352 to 354 (SAK). S227 and T247 together coordinate Mg(2+).

It belongs to the TRAFAC class OBG-HflX-like GTPase superfamily. HflX GTPase family. In terms of assembly, monomer. Associates with the 50S ribosomal subunit. It depends on Mg(2+) as a cofactor.

Its subcellular location is the cytoplasm. Its function is as follows. GTPase that associates with the 50S ribosomal subunit and may have a role during protein synthesis or ribosome biogenesis. The sequence is that of GTPase HflX from Caldanaerobacter subterraneus subsp. tengcongensis (strain DSM 15242 / JCM 11007 / NBRC 100824 / MB4) (Thermoanaerobacter tengcongensis).